We begin with the raw amino-acid sequence, 253 residues long: Hydroxyacylglutathione hydrolase (253 aa).

Positions 54, 56, 58, 59, 112, 131, and 169 each coordinate Zn(2+).

Belongs to the metallo-beta-lactamase superfamily. Glyoxalase II family. Monomer. The cofactor is Zn(2+).

The enzyme catalyses an S-(2-hydroxyacyl)glutathione + H2O = a 2-hydroxy carboxylate + glutathione + H(+). It participates in secondary metabolite metabolism; methylglyoxal degradation; (R)-lactate from methylglyoxal: step 2/2. In terms of biological role, thiolesterase that catalyzes the hydrolysis of S-D-lactoyl-glutathione to form glutathione and D-lactic acid. The sequence is that of Hydroxyacylglutathione hydrolase from Bartonella tribocorum (strain CIP 105476 / IBS 506).